A 376-amino-acid chain; its full sequence is Dihydroorotate dehydrogenase (quinone) (376 aa).

Residues 78 to 82 and Thr102 each bind FMN; that span reads AGFDK. Substrate is bound at residue Lys82. Substrate is bound at residue 127 to 131; the sequence is NRMGF. The FMN site is built by Asn157 and Asn190. Asn190 is a substrate binding site. The Nucleophile role is filled by Ser193. Residue Asn195 coordinates substrate. Positions 228 and 256 each coordinate FMN. A substrate-binding site is contributed by 257–258; the sequence is NT. FMN contacts are provided by residues Gly286, Gly315, and 336–337; that span reads YT.

Belongs to the dihydroorotate dehydrogenase family. Type 2 subfamily. Monomer. FMN is required as a cofactor.

The protein localises to the cell membrane. The catalysed reaction is (S)-dihydroorotate + a quinone = orotate + a quinol. Its pathway is pyrimidine metabolism; UMP biosynthesis via de novo pathway; orotate from (S)-dihydroorotate (quinone route): step 1/1. Catalyzes the conversion of dihydroorotate to orotate with quinone as electron acceptor. The chain is Dihydroorotate dehydrogenase (quinone) from Trichormus variabilis (strain ATCC 29413 / PCC 7937) (Anabaena variabilis).